The sequence spans 579 residues: Zinc finger-containing ubiquitin peptidase 1 (579 aa).

The segment at 2–25 adopts a C2H2-type 1 zinc-finger fold; it reads LSCDICGETVSSEPDMKAHLLIVH. The C2H2-type 2; atypical zinc finger occupies 30–53; the sequence is VICPFCKLSGVNYDEMCFHIETAH. 2 C2H2-type zinc fingers span residues 155–178 and 194–216; these read PECPFCGKIEDNSQDMETHVKTKH and YDCPMCGLVCTNYHILQEHVDLH. The tract at residues 227–249 is MIU; the sequence is NRVQCSRDLELAQQLQQEEDRKR. Residues 250–275 form a zUBD/ZHA region; the sequence is RSEESRQEMEEFQKLQRQYGLDNSGG. Lys-263 is subject to N6-acetyllysine. Cys-361 serves as the catalytic Nucleophile. His-492 acts as the Proton acceptor in catalysis. Asp-513 is a catalytic residue.

This sequence belongs to the peptidase C78 family. ZUFSP subfamily. Interacts with RPA1 and RPA2.

It localises to the cytoplasm. It is found in the nucleus. It carries out the reaction Thiol-dependent hydrolysis of ester, thioester, amide, peptide and isopeptide bonds formed by the C-terminal Gly of ubiquitin (a 76-residue protein attached to proteins as an intracellular targeting signal).. In terms of biological role, deubiquitinase with endodeubiquitinase activity that specifically interacts with and cleaves 'Lys-63'-linked long polyubiquitin chains. Shows only weak activity against 'Lys-11' and 'Lys-48'-linked chains. Plays an important role in genome stability pathways, functioning to prevent spontaneous DNA damage and also promote cellular survival in response to exogenous DNA damage. Modulates the ubiquitination status of replication protein A (RPA) complex proteins in response to replication stress. This Bos taurus (Bovine) protein is Zinc finger-containing ubiquitin peptidase 1.